A 356-amino-acid polypeptide reads, in one-letter code: Riboflavin biosynthesis protein RibD (356 aa).

The segment at 1 to 148 is deaminase; that stretch reads MIREIDKNYM…EDFFTYITQE (148 aa). The CMP/dCMP-type deaminase domain occupies 4 to 126; it reads EIDKNYMKLA…KLRNAGIEVD (123 aa). His-53 contributes to the Zn(2+) binding site. Glu-55 serves as the catalytic Proton donor. The Zn(2+) site is built by Cys-78 and Cys-87. The segment at 149–356 is reductase; it reads RPYITLKWAQ…EDLVIFFKRY (208 aa). Ala-157 lines the NADP(+) pocket. Position 171 (Ser-171) interacts with substrate. Trp-173 contributes to the NADP(+) binding site. Arg-187 contacts substrate. Residues Thr-199 and Asp-203 each coordinate NADP(+). Leu-207, Arg-210, and Glu-290 together coordinate substrate. NADP(+) is bound at residue 292–298; the sequence is GPRTLTS.

The protein in the N-terminal section; belongs to the cytidine and deoxycytidylate deaminase family. It in the C-terminal section; belongs to the HTP reductase family. It depends on Zn(2+) as a cofactor.

The enzyme catalyses 2,5-diamino-6-hydroxy-4-(5-phosphoribosylamino)-pyrimidine + H2O + H(+) = 5-amino-6-(5-phospho-D-ribosylamino)uracil + NH4(+). It catalyses the reaction 5-amino-6-(5-phospho-D-ribitylamino)uracil + NADP(+) = 5-amino-6-(5-phospho-D-ribosylamino)uracil + NADPH + H(+). It participates in cofactor biosynthesis; riboflavin biosynthesis; 5-amino-6-(D-ribitylamino)uracil from GTP: step 2/4. Its pathway is cofactor biosynthesis; riboflavin biosynthesis; 5-amino-6-(D-ribitylamino)uracil from GTP: step 3/4. In terms of biological role, converts 2,5-diamino-6-(ribosylamino)-4(3h)-pyrimidinone 5'-phosphate into 5-amino-6-(ribosylamino)-2,4(1h,3h)-pyrimidinedione 5'-phosphate. The polypeptide is Riboflavin biosynthesis protein RibD (ribD) (Aquifex aeolicus (strain VF5)).